The following is a 490-amino-acid chain: Metal cation symporter ZIP14 (490 aa).

A signal peptide spans 1–28 (MELLRPALPSYFLLTLLSIWTAASEARA). The Extracellular segment spans residues 29 to 155 (VSTGMPTISA…PSSVEVWGYG (127 aa)). N-linked (GlcNAc...) asparagine glycosylation is found at asparagine 75, asparagine 85, and asparagine 100. Residues 127–146 (ACSSENQENEENEQTEEGRP) form a disordered region. Residues 156 to 176 (LLCVTVISLCSLLGASVVPFM) traverse the membrane as a helical segment. At 177-184 (KKTFYKRL) the chain is on the cytoplasmic side. The chain crosses the membrane as a helical span at residues 185 to 205 (LLYFIALAIGTLYSNALFQLI). The Extracellular segment spans residues 206-222 (PEAFGFNPMEDYYVSKS). A helical transmembrane segment spans residues 223–243 (AVVFGGFYLFFFTEKILKMLL). The Cytoplasmic portion of the chain corresponds to 244–395 (KQKNEHHHGH…LLNAGMSLQQ (152 aa)). Residues 249–256 (HHHGHSHY) carry the HHHGHXHX-motif motif. The XEXPHE-motif motif lies at 374 to 379 (EEFPHE). A helical transmembrane segment spans residues 396–416 (ALFFNFLSACCCYVGLGFGIL). The Extracellular portion of the chain corresponds to 417 to 422 (AGSHFS). The helical transmembrane segment at 423–443 (ANWIFALAGGMFLYISLADMF) threads the bilayer. Residues 444-459 (PEMNEVSQEDERKGSA) lie on the Cytoplasmic side of the membrane. The chain crosses the membrane as a helical span at residues 460–480 (LIPFVIQNLGLLTGFGIMLVL). At 481–490 (TMYSGHIQIG) the chain is on the extracellular side.

It belongs to the ZIP transporter (TC 2.A.5) family. As to quaternary structure, homotrimer. Post-translationally, ubiquitinated. Ubiquitination occurs upon iron depletion. The ubiquitinated form undergoes proteasomal degradation. N-glycosylated. N-glycosylation at Asn-100 is required for iron-regulated extraction of the transporter from membranes and subsequent proteasomal degradation.

The protein localises to the cell membrane. It localises to the apical cell membrane. The protein resides in the basolateral cell membrane. It is found in the early endosome membrane. Its subcellular location is the late endosome membrane. The protein localises to the lysosome membrane. The catalysed reaction is Zn(2+)(out) + 2 hydrogencarbonate(out) = Zn(2+)(in) + 2 hydrogencarbonate(in). It catalyses the reaction Mn(2+)(out) + 2 hydrogencarbonate(out) = Mn(2+)(in) + 2 hydrogencarbonate(in). It carries out the reaction Fe(2+)(out) + 2 hydrogencarbonate(out) = Fe(2+)(in) + 2 hydrogencarbonate(in). The enzyme catalyses Cd(2+)(out) + 2 hydrogencarbonate(out) = Cd(2+)(in) + 2 hydrogencarbonate(in). Electroneutral transporter of the plasma membrane mediating the cellular uptake of the divalent metal cations zinc, manganese and iron that are important for tissue homeostasis, metabolism, development and immunity. Functions as an energy-dependent symporter, transporting through the membranes an electroneutral complex composed of a divalent metal cation and two bicarbonate anions. Beside these endogenous cellular substrates, can also import cadmium a non-essential metal which is cytotoxic and carcinogenic. In Bos taurus (Bovine), this protein is Metal cation symporter ZIP14.